The following is a 331-amino-acid chain: Ketol-acid reductoisomerase (NADP(+)) (331 aa).

Residues 2–182 form the KARI N-terminal Rossmann domain; the sequence is ARMYYDEDAN…GGTRAGVLET (181 aa). NADP(+) contacts are provided by residues 25 to 28, Ser-51, Ser-53, and 83 to 86; these read YGSQ and DEVQ. His-108 is an active-site residue. Gly-134 is an NADP(+) binding site. One can recognise a KARI C-terminal knotted domain in the interval 183 to 328; sequence TFREETETDL…KDLRAMFSWL (146 aa). Asp-191, Glu-195, Glu-227, and Glu-231 together coordinate Mg(2+). Ser-252 is a binding site for substrate.

The protein belongs to the ketol-acid reductoisomerase family. The cofactor is Mg(2+).

It carries out the reaction (2R)-2,3-dihydroxy-3-methylbutanoate + NADP(+) = (2S)-2-acetolactate + NADPH + H(+). The enzyme catalyses (2R,3R)-2,3-dihydroxy-3-methylpentanoate + NADP(+) = (S)-2-ethyl-2-hydroxy-3-oxobutanoate + NADPH + H(+). It functions in the pathway amino-acid biosynthesis; L-isoleucine biosynthesis; L-isoleucine from 2-oxobutanoate: step 2/4. It participates in amino-acid biosynthesis; L-valine biosynthesis; L-valine from pyruvate: step 2/4. Its function is as follows. Involved in the biosynthesis of branched-chain amino acids (BCAA). Catalyzes an alkyl-migration followed by a ketol-acid reduction of (S)-2-acetolactate (S2AL) to yield (R)-2,3-dihydroxy-isovalerate. In the isomerase reaction, S2AL is rearranged via a Mg-dependent methyl migration to produce 3-hydroxy-3-methyl-2-ketobutyrate (HMKB). In the reductase reaction, this 2-ketoacid undergoes a metal-dependent reduction by NADPH to yield (R)-2,3-dihydroxy-isovalerate. In Nostoc punctiforme (strain ATCC 29133 / PCC 73102), this protein is Ketol-acid reductoisomerase (NADP(+)).